The chain runs to 92 residues: Small ribosomal subunit protein bS20 (92 aa).

This sequence belongs to the bacterial ribosomal protein bS20 family.

Functionally, binds directly to 16S ribosomal RNA. The protein is Small ribosomal subunit protein bS20 of Rickettsia conorii (strain ATCC VR-613 / Malish 7).